A 339-amino-acid chain; its full sequence is Anthranilate phosphoribosyltransferase (339 aa).

Residues G80, 83–84 (GD), T88, 90–93 (NIST), 108–116 (KHGNRSVSS), and S120 each bind 5-phospho-alpha-D-ribose 1-diphosphate. G80 serves as a coordination point for anthranilate. S92 provides a ligand contact to Mg(2+). N111 serves as a coordination point for anthranilate. R166 is a binding site for anthranilate. D225 and E226 together coordinate Mg(2+).

This sequence belongs to the anthranilate phosphoribosyltransferase family. As to quaternary structure, homodimer. Mg(2+) is required as a cofactor.

The enzyme catalyses N-(5-phospho-beta-D-ribosyl)anthranilate + diphosphate = 5-phospho-alpha-D-ribose 1-diphosphate + anthranilate. It functions in the pathway amino-acid biosynthesis; L-tryptophan biosynthesis; L-tryptophan from chorismate: step 2/5. Functionally, catalyzes the transfer of the phosphoribosyl group of 5-phosphorylribose-1-pyrophosphate (PRPP) to anthranilate to yield N-(5'-phosphoribosyl)-anthranilate (PRA). The chain is Anthranilate phosphoribosyltransferase from Moorella thermoacetica (strain ATCC 39073 / JCM 9320).